Consider the following 479-residue polypeptide: MPRFVDRVVIHTRAGSGGNGCASVHREKFKPLGGPDGGNGGRGGSIVFVVDPQVHTLLDFHFRPHLTAASGKHGMGNNRDGAAGADLEVKVPEGTVVLDENGRLLADLVGAGTRFEAAAGGRGGLGNAALASRVRKAPGFALLGEKGQSRDLTLELKTVADVGLVGFPSAGKSSLVSAISAAKPKIADYPFTTLVPNLGVVSAGEHAFTVADVPGLIPGASRGRGLGLDFLRHIERCAVLVHVVDCATAEPGRDPISDIDALETELACYTPTLQGDAALGDLAARPRAVVLNKIDVPEARELAEFVRDDIAQRGWPVFCVSTATRENLQPLIFGLSQMISDYNAARPVAVPRRPVIRPIPVDDSGFTVEPDGHGGFVVSGARPERWIDQTNFDNDEAVGYLADRLARLGVEEELLRLGARSGCAVTIGEMTFDWEPQTPAGEPVAMSGRGTDPRLDSNKRVGAAERKAARSRRREHGDG.

One can recognise an Obg domain in the interval 2–159; it reads PRFVDRVVIH…RDLTLELKTV (158 aa). Residues 160–340 enclose the OBG-type G domain; that stretch reads ADVGLVGFPS…LIFGLSQMIS (181 aa). GTP-binding positions include 166 to 173, 191 to 195, 212 to 215, 292 to 295, and 321 to 323; these read GFPSAGKS, FTTLV, DVPG, NKID, and STA. Residues serine 173 and threonine 193 each coordinate Mg(2+). Residues 358 to 436 enclose the OCT domain; sequence PIPVDDSGFT…IGEMTFDWEP (79 aa). The segment at 434–479 is disordered; it reads WEPQTPAGEPVAMSGRGTDPRLDSNKRVGAAERKAARSRRREHGDG. Over residues 451–468 the composition is skewed to basic and acidic residues; the sequence is TDPRLDSNKRVGAAERKA. Over residues 469 to 479 the composition is skewed to basic residues; it reads ARSRRREHGDG.

Belongs to the TRAFAC class OBG-HflX-like GTPase superfamily. OBG GTPase family. In terms of assembly, monomer. Mg(2+) is required as a cofactor.

It localises to the cytoplasm. Its function is as follows. An essential GTPase which binds GTP, GDP and possibly (p)ppGpp with moderate affinity, with high nucleotide exchange rates and a fairly low GTP hydrolysis rate. Plays a role in control of the cell cycle, stress response, ribosome biogenesis and in those bacteria that undergo differentiation, in morphogenesis control. In Mycobacterium tuberculosis (strain ATCC 25177 / H37Ra), this protein is GTPase Obg.